The sequence spans 407 residues: S-adenosylmethionine synthase (407 aa).

H21 lines the ATP pocket. D23 serves as a coordination point for Mg(2+). E49 is a K(+) binding site. L-methionine is bound by residues E62 and Q105. A flexible loop region spans residues 105 to 115 (QSQEIGAGVDA). ATP is bound by residues 179 to 181 (DGK), D259, 265 to 266 (RK), A282, and K286. Position 259 (D259) interacts with L-methionine. Residue K290 participates in L-methionine binding.

This sequence belongs to the AdoMet synthase family. In terms of assembly, homotetramer; dimer of dimers. Mg(2+) serves as cofactor. Requires K(+) as cofactor.

Its subcellular location is the cytoplasm. It carries out the reaction L-methionine + ATP + H2O = S-adenosyl-L-methionine + phosphate + diphosphate. Its pathway is amino-acid biosynthesis; S-adenosyl-L-methionine biosynthesis; S-adenosyl-L-methionine from L-methionine: step 1/1. Functionally, catalyzes the formation of S-adenosylmethionine (AdoMet) from methionine and ATP. The overall synthetic reaction is composed of two sequential steps, AdoMet formation and the subsequent tripolyphosphate hydrolysis which occurs prior to release of AdoMet from the enzyme. The protein is S-adenosylmethionine synthase of Corynebacterium aurimucosum (strain ATCC 700975 / DSM 44827 / CIP 107346 / CN-1) (Corynebacterium nigricans).